A 362-amino-acid chain; its full sequence is Dihydroorotate dehydrogenase (quinone) (362 aa).

FMN contacts are provided by residues 60 to 64 (AGFDK) and threonine 84. Lysine 64 contacts substrate. 109-113 (NRMGF) contacts substrate. The FMN site is built by asparagine 137 and asparagine 168. Asparagine 168 is a substrate binding site. The active-site Nucleophile is serine 171. Asparagine 173 contacts substrate. Lysine 213 and serine 241 together coordinate FMN. 242–243 (NT) provides a ligand contact to substrate. Residues glycine 264, glycine 293, and 314–315 (YS) each bind FMN.

The protein belongs to the dihydroorotate dehydrogenase family. Type 2 subfamily. Monomer. The cofactor is FMN.

The protein localises to the cell membrane. It carries out the reaction (S)-dihydroorotate + a quinone = orotate + a quinol. It participates in pyrimidine metabolism; UMP biosynthesis via de novo pathway; orotate from (S)-dihydroorotate (quinone route): step 1/1. Catalyzes the conversion of dihydroorotate to orotate with quinone as electron acceptor. The sequence is that of Dihydroorotate dehydrogenase (quinone) from Bartonella henselae (strain ATCC 49882 / DSM 28221 / CCUG 30454 / Houston 1) (Rochalimaea henselae).